Reading from the N-terminus, the 314-residue chain is GTPase Era (314 aa).

The 169-residue stretch at 21–189 folds into the Era-type G domain; the sequence is KSGFVGIIGR…QKTLINLLEP (169 aa). Positions 29-36 are G1; the sequence is GRPNVGKS. GTP is bound at residue 29–36; sequence GRPNVGKS. Positions 55 to 59 are G2; that stretch reads QTTRN. Positions 76–79 are G3; that stretch reads DTPG. GTP contacts are provided by residues 76–80 and 138–141; these read DTPGI and NKSD. Residues 138–141 are G4; it reads NKSD. Residues 168–170 are G5; that stretch reads FSA. Residues 212–296 enclose the KH type-2 domain; it reads IREQILQQTR…YLQLFVKVEP (85 aa).

This sequence belongs to the TRAFAC class TrmE-Era-EngA-EngB-Septin-like GTPase superfamily. Era GTPase family. Monomer.

It is found in the cytoplasm. It localises to the cell inner membrane. Its function is as follows. An essential GTPase that binds both GDP and GTP, with rapid nucleotide exchange. Plays a role in 16S rRNA processing and 30S ribosomal subunit biogenesis and possibly also in cell cycle regulation and energy metabolism. The chain is GTPase Era from Rippkaea orientalis (strain PCC 8801 / RF-1) (Cyanothece sp. (strain PCC 8801)).